The primary structure comprises 1088 residues: RNA-directed RNA polymerase (1088 aa).

One can recognise a RdRp catalytic domain in the interval 501 to 687 (LSYGDVTRFL…AKRYIAGGKI (187 aa)).

Belongs to the reoviridae RNA-directed RNA polymerase family. Interacts with VP3 (Potential). Interacts with VP2; this interaction activates VP1. Interacts with NSP5; this interaction is probably necessary for the formation of functional virus factories. Interacts with NSP2; this interaction is weak. It depends on Mg(2+) as a cofactor.

The protein resides in the virion. It catalyses the reaction RNA(n) + a ribonucleoside 5'-triphosphate = RNA(n+1) + diphosphate. Its function is as follows. RNA-directed RNA polymerase that is involved in both transcription and genome replication. Together with VP3 capping enzyme, forms an enzyme complex positioned near the channels situated at each of the five-fold vertices of the core. Following infection, the outermost layer of the virus is lost, leaving a double-layered particle (DLP) made up of the core and VP6 shell. VP1 then catalyzes the transcription of fully conservative plus-strand genomic RNAs that are extruded through the DLP's channels into the cytoplasm where they function as mRNAs for translation of viral proteins. One copy of each of the viral (+)RNAs is also recruited during core assembly, together with newly synthesized polymerase complexes and VP2. The polymerase of these novo-formed particles catalyzes the synthesis of complementary minus-strands leading to dsRNA formation. To do so, the polymerase specifically recognizes and binds 4 bases 5'-UGUG-3' in the conserved 3'-sequence of plus-strand RNA templates. VP2 presumably activates the autoinhibited VP1-RNA complex to coordinate packaging and genome replication. Once dsRNA synthesis is complete, the polymerase switches to the transcriptional mode, thus providing secondary transcription. This is RNA-directed RNA polymerase from Bos taurus (Bovine).